The chain runs to 432 residues: 3-phosphoshikimate 1-carboxyvinyltransferase (432 aa).

Residues Lys22, Ser23, and Arg27 each contribute to the 3-phosphoshikimate site. Residue Lys22 participates in phosphoenolpyruvate binding. The phosphoenolpyruvate site is built by Gly96 and Arg127. Residues Ser173, Ser174, Gln175, Ser201, Asp316, Asn339, and Lys343 each contribute to the 3-phosphoshikimate site. Gln175 is a binding site for phosphoenolpyruvate. Asp316 acts as the Proton acceptor in catalysis. The phosphoenolpyruvate site is built by Arg347, Arg391, and Lys416.

Belongs to the EPSP synthase family. Monomer.

It is found in the cytoplasm. It carries out the reaction 3-phosphoshikimate + phosphoenolpyruvate = 5-O-(1-carboxyvinyl)-3-phosphoshikimate + phosphate. It functions in the pathway metabolic intermediate biosynthesis; chorismate biosynthesis; chorismate from D-erythrose 4-phosphate and phosphoenolpyruvate: step 6/7. Functionally, catalyzes the transfer of the enolpyruvyl moiety of phosphoenolpyruvate (PEP) to the 5-hydroxyl of shikimate-3-phosphate (S3P) to produce enolpyruvyl shikimate-3-phosphate and inorganic phosphate. This is 3-phosphoshikimate 1-carboxyvinyltransferase from Histophilus somni (strain 2336) (Haemophilus somnus).